A 97-amino-acid chain; its full sequence is MKFFAAAALFIAGVLAAPSPNAANSVTPLCNPGLYSNAQCCAVDVLGVADLNCATPPGVVNNAAEFQAACAKIGQEARCCVLPVLGQDVLCETPLGL.

Residues 1–16 form the signal peptide; sequence MKFFAAAALFIAGVLA. 4 cysteine pairs are disulfide-bonded: Cys30-Cys79, Cys40-Cys70, Cys41-Cys53, and Cys80-Cys91.

Belongs to the cerato-ulmin hydrophobin family. Homodimer. Homodimers further self-assemble to form highly ordered films at water-air interfaces through intermolecular interactions.

Its subcellular location is the secreted. The protein localises to the cell wall. Aerial growth, conidiation, and dispersal of filamentous fungi in the environment rely upon a capability of their secreting small amphipathic proteins called hydrophobins (HPBs) with low sequence identity. Class I can self-assemble into an outermost layer of rodlet bundles on aerial cell surfaces, conferring cellular hydrophobicity that supports fungal growth, development and dispersal; whereas Class II form highly ordered films at water-air interfaces through intermolecular interactions but contribute nothing to the rodlet structure. This is Class II hydrophobin 3 from Trichoderma asperellum (strain ATCC 204424 / CBS 433.97 / NBRC 101777).